We begin with the raw amino-acid sequence, 501 residues long: NADH-quinone oxidoreductase subunit N (501 aa).

14 helical membrane-spanning segments follow: residues 4–24, 34–54, 80–100, 112–132, 134–154, 167–187, 207–227, 241–261, 278–298, 314–334, 335–355, 376–396, 409–429, and 463–483; these read HLPILIVIIPLFVAMAARLLV, FVLAAALAVLASGAVALAETL, LAGGLIVLVAFFGLAALVYAG, GSFYALFLLAKAGLLGMCATG, LFNLYVFLEISSLAAYALIAF, LIIGTAAACFYLLGVGYLYAM, PVVILALVFIVAGLGIKMALF, PAPVLAFMAAVMTKVSAYALY, LQVLGWMAAAGILFGSIMAIA, VGYIVLGLAVGNVLALYGALL, HVLSHALVKGGLFFIAGGVSW, MGAFVAAALSMIGLPPTLGFF, GAWVFVAVLVVSSLLTAVYFF, and PASMLVPILVLGIGVVVLGLF.

It belongs to the complex I subunit 2 family. NDH-1 is composed of 14 different subunits. Subunits NuoA, H, J, K, L, M, N constitute the membrane sector of the complex.

Its subcellular location is the cell membrane. The enzyme catalyses a quinone + NADH + 5 H(+)(in) = a quinol + NAD(+) + 4 H(+)(out). Its function is as follows. NDH-1 shuttles electrons from NADH, via FMN and iron-sulfur (Fe-S) centers, to quinones in the respiratory chain. The immediate electron acceptor for the enzyme in this species is believed to be a menaquinone. Couples the redox reaction to proton translocation (for every two electrons transferred, four hydrogen ions are translocated across the cytoplasmic membrane), and thus conserves the redox energy in a proton gradient. The protein is NADH-quinone oxidoreductase subunit N of Desulforudis audaxviator (strain MP104C).